We begin with the raw amino-acid sequence, 597 residues long: Protein kinase C-like 3 (597 aa).

In terms of domain architecture, PB1 spans 12–95 (DIKLKTRFHG…AELNIHVFVG (84 aa)). Residues 127–177 (GHRFQGKRLNRRIQCFICHDYIWGIGRQGFRCVDCRLCVHKKCHRHVRTHC) form a Phorbol-ester/DAG-type zinc finger. A disordered region spans residues 181 to 238 (PQGPNVPVAPSSGVGSLRGGRLDTSSSTTRSGGGIDNGAFHEHEIESPGSAKDMSRST). One can recognise a Protein kinase domain in the interval 253–522 (FRLLTVIGRG…LNDMKEHDFF (270 aa)). ATP contacts are provided by residues 259-267 (IGRGSYAKV) and Lys282. Catalysis depends on Asp377, which acts as the Proton acceptor. Residues 524–595 (GFIDWEALEQ…VNPLQMSRED (72 aa)) enclose the AGC-kinase C-terminal domain.

Belongs to the protein kinase superfamily. AGC Ser/Thr protein kinase family. PKC subfamily. As to quaternary structure, interaction with par-3 required for the peripheral localization of par-6 and to form a par-3/par-6/pkc-3 complex, which is activated when cdc-42 interacts with par-6. Binds avidly to the phosphotyrosine interaction domain (PID) of a novel pkc-3 adapter protein num-1, which enables tethering and targeting of pkc-3 to the cell periphery. It depends on Mg(2+) as a cofactor.

It is found in the cytoplasm. The protein resides in the cytoskeleton. It carries out the reaction L-seryl-[protein] + ATP = O-phospho-L-seryl-[protein] + ADP + H(+). The catalysed reaction is L-threonyl-[protein] + ATP = O-phospho-L-threonyl-[protein] + ADP + H(+). In terms of biological role, required for the normal progression of embryogenesis and viability of the organism. Plays an indispensable role in establishing embryonic polarity and in recruiting and maintaining par-6 to the periphery, through interaction with par-3. Required for epithelial cell polarity in the distal spermatheca. Phosphorylates serine residues of num-1. Required for the expression of antimicrobial peptide nlp-29 in response in response to fungal infection or physical injury. The sequence is that of Protein kinase C-like 3 from Caenorhabditis briggsae.